Reading from the N-terminus, the 341-residue chain is UDP-N-acetylenolpyruvoylglucosamine reductase (341 aa).

Positions 15-185 constitute an FAD-binding PCMH-type domain; it reads VEQSCLSLIE…TAVGLRLPKA (171 aa). Residue Arg161 is part of the active site. Ser231 acts as the Proton donor in catalysis. Residue Glu327 is part of the active site.

It belongs to the MurB family. The cofactor is FAD.

Its subcellular location is the cytoplasm. The catalysed reaction is UDP-N-acetyl-alpha-D-muramate + NADP(+) = UDP-N-acetyl-3-O-(1-carboxyvinyl)-alpha-D-glucosamine + NADPH + H(+). Its pathway is cell wall biogenesis; peptidoglycan biosynthesis. Cell wall formation. The sequence is that of UDP-N-acetylenolpyruvoylglucosamine reductase from Shewanella sp. (strain ANA-3).